We begin with the raw amino-acid sequence, 179 residues long: Peptidyl-prolyl cis-trans isomerase A (179 aa).

Residues Phe-15 to Gln-178 form the PPIase cyclophilin-type domain.

It belongs to the cyclophilin-type PPIase family.

It is found in the cytoplasm. The protein localises to the cytosol. The enzyme catalyses [protein]-peptidylproline (omega=180) = [protein]-peptidylproline (omega=0). Its activity is regulated as follows. Binds cyclosporin A (CsA). CsA mediates some of its effects via an inhibitory action on PPIase. Its function is as follows. PPIase that catalyzes the cis-trans isomerization of proline imidic peptide bonds in oligopeptides and may therefore assist protein folding. This chain is Peptidyl-prolyl cis-trans isomerase A (ppiA), found in Dictyostelium discoideum (Social amoeba).